Reading from the N-terminus, the 356-residue chain is MSTVTITDLARENVRNLTPYQSARRLGGNGDVWLNANEYPTAVEFQLTQQTLNRYPECQPKAVIENYAQYAGVKPEQVLVSCGADEGIELLIRAFCEPGKDAILYCPPTYGMYSVSAETIGVECRTVPTLENWQLDLQGISDKLDGVKVVYVCSPNNPTGQLINPQDFRTLLELTRGKAIVVADEAYIEFCPQASLAGWLAEYPHLAILRTLSKAFALAGLRCGFTLANEEVINLLMKVIAPYPLSTPVADIAAQALSPQGIVAMRERVAQIIAEREYLIAALKEISCVEQVFDSETNYILARFKASSAVFKSLWDQGIILRDQNKQPSLSGCLRITVGTREESQRVIDALRAEQV.

K214 carries the post-translational modification N6-(pyridoxal phosphate)lysine.

The protein belongs to the class-II pyridoxal-phosphate-dependent aminotransferase family. Histidinol-phosphate aminotransferase subfamily. As to quaternary structure, homodimer. It depends on pyridoxal 5'-phosphate as a cofactor.

It carries out the reaction L-histidinol phosphate + 2-oxoglutarate = 3-(imidazol-4-yl)-2-oxopropyl phosphate + L-glutamate. It participates in amino-acid biosynthesis; L-histidine biosynthesis; L-histidine from 5-phospho-alpha-D-ribose 1-diphosphate: step 7/9. The chain is Histidinol-phosphate aminotransferase from Shigella dysenteriae serotype 1 (strain Sd197).